A 215-amino-acid chain; its full sequence is Chaperone protein TorD (215 aa).

The protein belongs to the TorD/DmsD family. TorD subfamily.

It is found in the cytoplasm. In terms of biological role, involved in the biogenesis of TorA. Acts on TorA before the insertion of the molybdenum cofactor and, as a result, probably favors a conformation of the apoenzyme that is competent for acquiring the cofactor. This is Chaperone protein TorD from Vibrio atlanticus (strain LGP32) (Vibrio splendidus (strain Mel32)).